The chain runs to 125 residues: S-adenosylmethionine decarboxylase proenzyme (125 aa).

Ser71 serves as the catalytic Schiff-base intermediate with substrate; via pyruvic acid. Ser71 is modified (pyruvic acid (Ser); by autocatalysis). Residue His76 is the Proton acceptor; for processing activity of the active site. Cys91 (proton donor; for catalytic activity) is an active-site residue.

The protein belongs to the prokaryotic AdoMetDC family. Type 1 subfamily. In terms of assembly, heterotetramer of two alpha and two beta chains arranged as a dimer of alpha/beta heterodimers. Pyruvate is required as a cofactor. In terms of processing, is synthesized initially as an inactive proenzyme. Formation of the active enzyme involves a self-maturation process in which the active site pyruvoyl group is generated from an internal serine residue via an autocatalytic post-translational modification. Two non-identical subunits are generated from the proenzyme in this reaction, and the pyruvate is formed at the N-terminus of the alpha chain, which is derived from the carboxyl end of the proenzyme. The post-translation cleavage follows an unusual pathway, termed non-hydrolytic serinolysis, in which the side chain hydroxyl group of the serine supplies its oxygen atom to form the C-terminus of the beta chain, while the remainder of the serine residue undergoes an oxidative deamination to produce ammonia and the pyruvoyl group blocking the N-terminus of the alpha chain.

The enzyme catalyses S-adenosyl-L-methionine + H(+) = S-adenosyl 3-(methylsulfanyl)propylamine + CO2. It functions in the pathway amine and polyamine biosynthesis; S-adenosylmethioninamine biosynthesis; S-adenosylmethioninamine from S-adenosyl-L-methionine: step 1/1. Its function is as follows. Catalyzes the decarboxylation of S-adenosylmethionine to S-adenosylmethioninamine (dcAdoMet), the propylamine donor required for the synthesis of the polyamines spermine and spermidine from the diamine putrescine. This chain is S-adenosylmethionine decarboxylase proenzyme, found in Pyrobaculum arsenaticum (strain DSM 13514 / JCM 11321 / PZ6).